We begin with the raw amino-acid sequence, 761 residues long: Phosphoribosylformylglycinamidine synthase subunit PurL (761 aa).

A compositionally biased stretch (low complexity) spans 1 to 16 (MTGNPAAPAATSVSPP). The tract at residues 1-21 (MTGNPAAPAATSVSPPAEQPY) is disordered. Histidine 57 is an active-site residue. ATP-binding residues include tyrosine 60 and lysine 101. Residue glutamate 103 coordinates Mg(2+). Substrate is bound by residues 104 to 107 (SHNH) and arginine 126. Histidine 105 serves as the catalytic Proton acceptor. Aspartate 127 provides a ligand contact to Mg(2+). Residue glutamine 252 participates in substrate binding. Aspartate 280 contributes to the Mg(2+) binding site. A substrate-binding site is contributed by 329 to 331 (ESQ). Residues asparagine 519 and glycine 556 each coordinate ATP. Position 557 (asparagine 557) interacts with Mg(2+). Serine 559 contacts substrate.

Belongs to the FGAMS family. In terms of assembly, monomer. Part of the FGAM synthase complex composed of 1 PurL, 1 PurQ and 2 PurS subunits.

It localises to the cytoplasm. It catalyses the reaction N(2)-formyl-N(1)-(5-phospho-beta-D-ribosyl)glycinamide + L-glutamine + ATP + H2O = 2-formamido-N(1)-(5-O-phospho-beta-D-ribosyl)acetamidine + L-glutamate + ADP + phosphate + H(+). Its pathway is purine metabolism; IMP biosynthesis via de novo pathway; 5-amino-1-(5-phospho-D-ribosyl)imidazole from N(2)-formyl-N(1)-(5-phospho-D-ribosyl)glycinamide: step 1/2. Part of the phosphoribosylformylglycinamidine synthase complex involved in the purines biosynthetic pathway. Catalyzes the ATP-dependent conversion of formylglycinamide ribonucleotide (FGAR) and glutamine to yield formylglycinamidine ribonucleotide (FGAM) and glutamate. The FGAM synthase complex is composed of three subunits. PurQ produces an ammonia molecule by converting glutamine to glutamate. PurL transfers the ammonia molecule to FGAR to form FGAM in an ATP-dependent manner. PurS interacts with PurQ and PurL and is thought to assist in the transfer of the ammonia molecule from PurQ to PurL. This chain is Phosphoribosylformylglycinamidine synthase subunit PurL, found in Frankia casuarinae (strain DSM 45818 / CECT 9043 / HFP020203 / CcI3).